The primary structure comprises 671 residues: Talaropentaene synthase (671 aa).

Aspartate 92 provides a ligand contact to Mg(2+). Positions 92-96 match the DDXXD 1 motif; sequence DDMTD. Positions 223–231 match the NSE/DTE motif; the sequence is NDLYSYEKE. Residues lysine 389, arginine 392, and histidine 421 each contribute to the isopentenyl diphosphate site. Aspartate 428 and aspartate 432 together coordinate Mg(2+). The DDXXD 2 signature appears at 428 to 432; it reads DDIED. Arginine 437 provides a ligand contact to dimethylallyl diphosphate. Arginine 438 lines the isopentenyl diphosphate pocket. Residues lysine 515, threonine 516, glutamine 551, asparagine 558, lysine 568, and lysine 578 each coordinate dimethylallyl diphosphate.

In the N-terminal section; belongs to the terpene synthase family. This sequence in the C-terminal section; belongs to the FPP/GGPP synthase family. It depends on Mg(2+) as a cofactor.

It carries out the reaction 5 isopentenyl diphosphate + dimethylallyl diphosphate = all-trans-hexaprenyl diphosphate + 5 diphosphate. It catalyses the reaction all-trans-hexaprenyl diphosphate = talaropentaene + diphosphate. In terms of biological role, bifunctional terpene synthase that converts dimethylallyl diphosphate (DMAPP) and isopentenyl diphosphate (IPP) into talaropentaene as a single product. The C-terminal prenyltransferase (PT) domain of MpMS catalyzes formation of hexaprenyl diphosphate (HexPP), whereas the N-terminal terpene cyclase (TC) domain catalyzes the cyclization of HexPP to talaropentaene. This Talaromyces verruculosus (Penicillium verruculosum) protein is Talaropentaene synthase.